Reading from the N-terminus, the 251-residue chain is Ubiquinone/menaquinone biosynthesis C-methyltransferase UbiE (251 aa).

S-adenosyl-L-methionine contacts are provided by residues Thr-74, Asp-95, 123–124 (NA), and Ser-140.

This sequence belongs to the class I-like SAM-binding methyltransferase superfamily. MenG/UbiE family.

It carries out the reaction a 2-demethylmenaquinol + S-adenosyl-L-methionine = a menaquinol + S-adenosyl-L-homocysteine + H(+). The catalysed reaction is a 2-methoxy-6-(all-trans-polyprenyl)benzene-1,4-diol + S-adenosyl-L-methionine = a 5-methoxy-2-methyl-3-(all-trans-polyprenyl)benzene-1,4-diol + S-adenosyl-L-homocysteine + H(+). It participates in quinol/quinone metabolism; menaquinone biosynthesis; menaquinol from 1,4-dihydroxy-2-naphthoate: step 2/2. It functions in the pathway cofactor biosynthesis; ubiquinone biosynthesis. Methyltransferase required for the conversion of demethylmenaquinol (DMKH2) to menaquinol (MKH2) and the conversion of 2-polyprenyl-6-methoxy-1,4-benzoquinol (DDMQH2) to 2-polyprenyl-3-methyl-6-methoxy-1,4-benzoquinol (DMQH2). The chain is Ubiquinone/menaquinone biosynthesis C-methyltransferase UbiE from Serratia proteamaculans (strain 568).